The primary structure comprises 100 residues: Putative pterin-4-alpha-carbinolamine dehydratase (100 aa).

Belongs to the pterin-4-alpha-carbinolamine dehydratase family.

It carries out the reaction (4aS,6R)-4a-hydroxy-L-erythro-5,6,7,8-tetrahydrobiopterin = (6R)-L-erythro-6,7-dihydrobiopterin + H2O. This chain is Putative pterin-4-alpha-carbinolamine dehydratase, found in Allorhizobium ampelinum (strain ATCC BAA-846 / DSM 112012 / S4) (Agrobacterium vitis (strain S4)).